The sequence spans 205 residues: Regulator of G-protein signaling 4 (205 aa).

3 S-palmitoyl cysteine lipidation sites follow: Cys2, Cys12, and Cys95. In terms of domain architecture, RGS spans 62 to 178 (SLENLISHEC…LKSRFYLDLV (117 aa)).

In terms of processing, palmitoylated on Cys-2 and/or Cys-12. Phosphorylated by cyclic GMP-dependent protein kinase. As to expression, expressed in brain and heart. Expressed in brain at protein level. Expressed in prefontal and visual cortex. Isoform 4 and isoform 5 are expressed ubiquitously. Isoform 1, isoform 2 and isoform 3 are not expressed in the cerebellum.

In terms of biological role, inhibits signal transduction by increasing the GTPase activity of G protein alpha subunits thereby driving them into their inactive GDP-bound form. Activity on G(z)-alpha is inhibited by phosphorylation of the G-protein. Activity on G(z)-alpha and G(i)-alpha-1 is inhibited by palmitoylation of the G-protein. This chain is Regulator of G-protein signaling 4 (RGS4), found in Homo sapiens (Human).